Here is a 251-residue protein sequence, read N- to C-terminus: MLSLDLMSHTLDAELSTKARILVVEDEAVIRDMIVMGLEEEGYEVFFADNGRTGLNMLQNPEFNAPDMPLDLVILDIMLPEVNGLDLCRFLRYQGNTIPILVLSAKASETDRVLGLEVGADDYLTKPFSLRELVARCRALLRRQQFIRSTPKNSVRQFKDISLFPEECRVTVRGEEVSLSPKEYRLLELFMSYPRRVWSRDQLIEQVWGADFLGDTKTVDVHIRWLREKLELDPSQPEYLITVRGFGYRFG.

In terms of domain architecture, Response regulatory spans 20 to 141; it reads RILVVEDEAV…ELVARCRALL (122 aa). D76 carries the post-translational modification 4-aspartylphosphate. Positions 153 to 251 form a DNA-binding region, ompR/PhoB-type; that stretch reads NSVRQFKDIS…TVRGFGYRFG (99 aa).

Phosphorylation.

This is Probable transcriptional regulatory protein SYNPCC7002_A0851 from Picosynechococcus sp. (strain ATCC 27264 / PCC 7002 / PR-6) (Agmenellum quadruplicatum).